Here is a 270-residue protein sequence, read N- to C-terminus: Formamidopyrimidine-DNA glycosylase (270 aa).

The active-site Schiff-base intermediate with DNA is Pro2. Glu3 serves as the catalytic Proton donor. The Proton donor; for beta-elimination activity role is filled by Lys59. DNA contacts are provided by His91, Arg110, and Lys151. An FPG-type zinc finger spans residues 236–270; that stretch reads RVYGRDKEPCVTCGQQVKSKVLGGRNTFWCSRCQK. Arg260 (proton donor; for delta-elimination activity) is an active-site residue.

The protein belongs to the FPG family. As to quaternary structure, monomer. Zn(2+) is required as a cofactor.

The enzyme catalyses Hydrolysis of DNA containing ring-opened 7-methylguanine residues, releasing 2,6-diamino-4-hydroxy-5-(N-methyl)formamidopyrimidine.. It catalyses the reaction 2'-deoxyribonucleotide-(2'-deoxyribose 5'-phosphate)-2'-deoxyribonucleotide-DNA = a 3'-end 2'-deoxyribonucleotide-(2,3-dehydro-2,3-deoxyribose 5'-phosphate)-DNA + a 5'-end 5'-phospho-2'-deoxyribonucleoside-DNA + H(+). Involved in base excision repair of DNA damaged by oxidation or by mutagenic agents. Acts as a DNA glycosylase that recognizes and removes damaged bases. Has a preference for oxidized purines, such as 7,8-dihydro-8-oxoguanine (8-oxoG). Has AP (apurinic/apyrimidinic) lyase activity and introduces nicks in the DNA strand. Cleaves the DNA backbone by beta-delta elimination to generate a single-strand break at the site of the removed base with both 3'- and 5'-phosphates. This is Formamidopyrimidine-DNA glycosylase from Bdellovibrio bacteriovorus (strain ATCC 15356 / DSM 50701 / NCIMB 9529 / HD100).